The sequence spans 437 residues: F-box only protein 9 (437 aa).

The interval 1–29 is disordered; it reads MAEAEEDCHSEAVREGDDDDENESPAETD. Positions 16 to 26 are enriched in acidic residues; the sequence is GDDDDENESPA. A TPR repeat occupies 84–117; the sequence is ARELFLKAVEEEQNGALYEAIKFYRRAMQLVPDI. Ser-126 bears the Phosphoserine mark. An F-box domain is found at 175-226; the sequence is QTHISALPMEVLMYVFRWVVSSDLDLRSLEQLSQVCRGFYICARDPEIWRLA.

In terms of assembly, part of the SCF (SKP1-CUL1-F-box) E3 ubiquitin-protein ligase complex SCF(FBXO9) composed of CUL1, SKP1, RBX1 and FBXO9. Interacts with TTI1 and TELO2; when TTI1 and TELO2 are phosphorylated by CK2.

The protein localises to the cytoplasm. It participates in protein modification; protein ubiquitination. Its function is as follows. Substrate recognition component of a SCF (SKP1-CUL1-F-box protein) E3 ubiquitin-protein ligase complex which mediates the ubiquitination and subsequent proteasomal degradation of target proteins and plays a role in several biological processes such as cell cycle, cell proliferation, or maintenance of chromosome stability. Ubiquitinates mTORC1-bound TTI1 and TELO2 when they are phosphorylated by CK2 following growth factor deprivation, leading to their degradation. In contrast, does not mediate ubiquitination of TTI1 and TELO2 when they are part of the mTORC2 complex. As a consequence, mTORC1 is inactivated to restrain cell growth and protein translation, while mTORC2 is the activated due to the relief of feedback inhibition by mTORC1. Plays a role in maintaining epithelial cell survival by regulating the turn-over of chromatin modulator PRMT4 through ubiquitination and degradation by the proteasomal pathway. Also regulates PPARgamma stability by facilitating PPARgamma/PPARG ubiquitination and thereby plays a role in adipocyte differentiation. The polypeptide is F-box only protein 9 (FBXO9) (Bos taurus (Bovine)).